The following is a 103-amino-acid chain: Small ribosomal subunit protein uS10 (103 aa).

This sequence belongs to the universal ribosomal protein uS10 family. In terms of assembly, part of the 30S ribosomal subunit.

In terms of biological role, involved in the binding of tRNA to the ribosomes. The polypeptide is Small ribosomal subunit protein uS10 (Shewanella pealeana (strain ATCC 700345 / ANG-SQ1)).